The primary structure comprises 208 residues: Small ribosomal subunit protein eS1 (208 aa).

This sequence belongs to the eukaryotic ribosomal protein eS1 family.

This Saccharolobus islandicus (strain Y.N.15.51 / Yellowstone #2) (Sulfolobus islandicus) protein is Small ribosomal subunit protein eS1.